A 342-amino-acid chain; its full sequence is RNA 3'-terminal phosphate cyclase (342 aa).

ATP is bound by residues glutamine 102 and 283–287 (HLADQ). Histidine 308 serves as the catalytic Tele-AMP-histidine intermediate.

It belongs to the RNA 3'-terminal cyclase family. Type 1 subfamily.

Its subcellular location is the cytoplasm. It catalyses the reaction a 3'-end 3'-phospho-ribonucleotide-RNA + ATP = a 3'-end 2',3'-cyclophospho-ribonucleotide-RNA + AMP + diphosphate. Catalyzes the conversion of 3'-phosphate to a 2',3'-cyclic phosphodiester at the end of RNA. The mechanism of action of the enzyme occurs in 3 steps: (A) adenylation of the enzyme by ATP; (B) transfer of adenylate to an RNA-N3'P to produce RNA-N3'PP5'A; (C) and attack of the adjacent 2'-hydroxyl on the 3'-phosphorus in the diester linkage to produce the cyclic end product. The biological role of this enzyme is unknown but it is likely to function in some aspects of cellular RNA processing. The chain is RNA 3'-terminal phosphate cyclase from Pseudomonas fluorescens (strain ATCC BAA-477 / NRRL B-23932 / Pf-5).